The chain runs to 207 residues: Recombination protein RecR (207 aa).

The C4-type zinc-finger motif lies at 62–77 (CSRCNTFTEQDVCETC). Positions 85–184 (SVLCVVETPA…KVSRLARGVP (100 aa)) constitute a Toprim domain.

This sequence belongs to the RecR family.

Its function is as follows. May play a role in DNA repair. It seems to be involved in an RecBC-independent recombinational process of DNA repair. It may act with RecF and RecO. In Ralstonia nicotianae (strain ATCC BAA-1114 / GMI1000) (Ralstonia solanacearum), this protein is Recombination protein RecR.